The primary structure comprises 251 residues: Small ribosomal subunit protein uS2 (251 aa).

Residue Ser-2 is modified to N-acetylserine. The interval 213–251 (QVAEEATAAADEDVKEEVAEEQTEAADWAEGNTEEVASW) is disordered. The segment covering 222–236 (ADEDVKEEVAEEQTE) has biased composition (acidic residues).

Belongs to the universal ribosomal protein uS2 family. As to quaternary structure, component of the small ribosomal subunit. Mature ribosomes consist of a small (40S) and a large (60S) subunit. The 40S subunit contains about 33 different proteins and 1 molecule of RNA (18S). The 60S subunit contains about 49 different proteins and 3 molecules of RNA (25S, 5.8S and 5S). Interacts with RPS21.

Its subcellular location is the cytoplasm. In terms of biological role, required for the assembly and/or stability of the 40S ribosomal subunit. Required for the processing of the 20S rRNA-precursor to mature 18S rRNA in a late step of the maturation of 40S ribosomal subunits. The chain is Small ribosomal subunit protein uS2 from Lachancea thermotolerans (strain ATCC 56472 / CBS 6340 / NRRL Y-8284) (Yeast).